The primary structure comprises 445 residues: Phosphatidate cytidylyltransferase 2 (445 aa).

Positions 1 to 39 (MTELRQRVAHEPVAPPEDKESESEAKVDGETASDSESRA) are enriched in basic and acidic residues. Positions 1 to 49 (MTELRQRVAHEPVAPPEDKESESEAKVDGETASDSESRAESAPLPVSAD) are disordered. The residue at position 21 (S21) is a Phosphoserine. T31 is subject to Phosphothreonine. A phosphoserine mark is found at S33, S35, and S37. T51 is modified (phosphothreonine). Transmembrane regions (helical) follow at residues 79 to 99 (MIAFFFIIIYLGPMVLMIIVM), 132 to 152 (FLLCVNYFFYGETVTDYFFTL), 166 to 186 (HRFISFTLYLIGFCMFVLSLV), 213 to 233 (LVIHNLFEGMIWFIVPISCVI), 262 to 282 (GFIGGFFATVVFGLLLSYVMS), and 340 to 360 (IALSTFASLIGPFGGFFASGF).

The protein belongs to the CDS family. As to quaternary structure, homodimer. As to expression, widely expressed. Expressed in heart, brain and retina, and to a lesser extent in placenta, lung, liver, skeletal muscle, kidney and pancreas.

It is found in the endoplasmic reticulum membrane. It catalyses the reaction a 1,2-diacyl-sn-glycero-3-phosphate + CTP + H(+) = a CDP-1,2-diacyl-sn-glycerol + diphosphate. The catalysed reaction is 1-octadecanoyl-2-(5Z,8Z,11Z,14Z-eicosatetraenoyl)-sn-glycero-3-phosphate + CTP + H(+) = 1-octadecanoyl-2-(5Z,8Z,11Z,14Z-eicosatetraenoyl)-sn-glycero-3-cytidine-5'-diphosphate + diphosphate. It carries out the reaction 1-octadecanoyl-2-(9Z,12Z-octadecadienoyl)-sn-glycero-3-phosphate + CTP + H(+) = 1-octadecanoyl-2-(9Z,12Z-octadecadienoyl)-sn-glycero-3-cytidine-5'-diphosphate + diphosphate. The enzyme catalyses 1-hexadecanoyl-2-(5Z,8Z,11Z,14Z-eicosatetraenoyl)-sn-glycero-3-phosphate + CTP + H(+) = 1-hexadecanoyl-2-(5Z,8Z,11Z,14Z-eicosatetraenoyl)-sn-glycero-3-cytidine-5'-diphosphate + diphosphate. It catalyses the reaction 1,2-di-(5Z,8Z,11Z,14Z)-eicosatetraenoyl-sn-glycero-3-phosphate + CTP + H(+) = 1,2-di-(5Z,8Z,11Z,14Z-eicosatetraenoyl)-sn-glycero-3-cytidine-5'-diphosphate + diphosphate. The catalysed reaction is 1-octadecanoyl-2-(9Z-octadecenoyl)-sn-glycero-3-phosphate + CTP + H(+) = 1-octadecanoyl-2-(9Z-octadecenoyl)-sn-glycero-3-cytidine-5'-diphosphate + diphosphate. It carries out the reaction 1-octadecanoyl-2-(4Z,7Z,10Z,13Z,16Z,19Z-docosahexaenoyl)-sn-glycero-3-phosphate + CTP + H(+) = 1-octadecanoyl-2-(4Z,7Z,10Z,13Z,16Z,19Z-docosahexaenoyl)-sn-glycero-3-cytidine-5'-diphosphate + diphosphate. The enzyme catalyses 1,2-di-(9Z,12Z-octadecadienoyl)-sn-glycero-3-phosphate + CTP + H(+) = 1,2-di-(9Z,12Z-octadecadienoyl)-sn-glycero-3-cytidine-5'-diphosphate + diphosphate. It catalyses the reaction 1,2-di-(9Z-octadecenoyl)-sn-glycero-3-phosphate + CTP + H(+) = 1,2-di-(9Z-octadecenoyl)-sn-glycero-3-cytidine-5'-diphosphate + diphosphate. It functions in the pathway phospholipid metabolism; CDP-diacylglycerol biosynthesis; CDP-diacylglycerol from sn-glycerol 3-phosphate: step 3/3. Inhibited by its anionic phospholipid end products, with phosphatidylinositol-(4,5)- bisphosphate (PIP2) showing the strongest inhibition. Inhibition is also acyl chain specific, with 1-stearoyl-2-arachidonoyl-snphosphatidylinositol showing the strongest inhibition. Its function is as follows. Catalyzes the conversion of phosphatidic acid (PA) to CDP-diacylglycerol (CDP-DAG), an essential intermediate in the synthesis of phosphatidylglycerol, cardiolipin and phosphatidylinositol. Exhibits specificity for the nature of the acyl chains at the sn-1 and sn-2 positions in the substrate, PA and the preferred acyl chain composition is 1-stearoyl-2-arachidonoyl-sn-phosphatidic acid. Plays an important role in regulating the growth and maturation of lipid droplets which are storage organelles at the center of lipid and energy homeostasis. The polypeptide is Phosphatidate cytidylyltransferase 2 (Homo sapiens (Human)).